The following is a 490-amino-acid chain: Apocarotenoid-15,15'-oxygenase (490 aa).

H183 provides a ligand contact to Fe cation. S206 lines the substrate pocket. Residue H238 coordinates Fe cation. F303 provides a ligand contact to substrate. H304 and H484 together coordinate Fe cation.

This sequence belongs to the carotenoid oxygenase family. Fe(2+) serves as cofactor.

It carries out the reaction all-trans-8'-apo-beta-carotenal + O2 = (2E,4E,6E)-2,6-dimethylocta-2,4,6-trienedial + all-trans-retinal. In terms of biological role, cleaves a number of carotenals and carotenols in the all-trans configuration at the 15-15' double bond producing retinal or retinol, respectively. Also shows activity toward lycopenals and the corresponding alcohols. Does not cleave beta-carotene or lycopene. This is Apocarotenoid-15,15'-oxygenase from Synechocystis sp. (strain ATCC 27184 / PCC 6803 / Kazusa).